Reading from the N-terminus, the 316-residue chain is 4-hydroxy-3-methylbut-2-enyl diphosphate reductase (316 aa).

A [4Fe-4S] cluster-binding site is contributed by cysteine 12. (2E)-4-hydroxy-3-methylbut-2-enyl diphosphate is bound by residues histidine 41 and histidine 74. Residues histidine 41 and histidine 74 each contribute to the dimethylallyl diphosphate site. Positions 41 and 74 each coordinate isopentenyl diphosphate. Cysteine 96 lines the [4Fe-4S] cluster pocket. Residue histidine 124 coordinates (2E)-4-hydroxy-3-methylbut-2-enyl diphosphate. Dimethylallyl diphosphate is bound at residue histidine 124. Isopentenyl diphosphate is bound at residue histidine 124. Glutamate 126 (proton donor) is an active-site residue. Threonine 169 lines the (2E)-4-hydroxy-3-methylbut-2-enyl diphosphate pocket. Cysteine 199 lines the [4Fe-4S] cluster pocket. Residues serine 227, serine 228, asparagine 229, and serine 271 each contribute to the (2E)-4-hydroxy-3-methylbut-2-enyl diphosphate site. Dimethylallyl diphosphate-binding residues include serine 227, serine 228, asparagine 229, and serine 271. Residues serine 227, serine 228, asparagine 229, and serine 271 each coordinate isopentenyl diphosphate.

Belongs to the IspH family. The cofactor is [4Fe-4S] cluster.

The catalysed reaction is isopentenyl diphosphate + 2 oxidized [2Fe-2S]-[ferredoxin] + H2O = (2E)-4-hydroxy-3-methylbut-2-enyl diphosphate + 2 reduced [2Fe-2S]-[ferredoxin] + 2 H(+). It carries out the reaction dimethylallyl diphosphate + 2 oxidized [2Fe-2S]-[ferredoxin] + H2O = (2E)-4-hydroxy-3-methylbut-2-enyl diphosphate + 2 reduced [2Fe-2S]-[ferredoxin] + 2 H(+). It functions in the pathway isoprenoid biosynthesis; dimethylallyl diphosphate biosynthesis; dimethylallyl diphosphate from (2E)-4-hydroxy-3-methylbutenyl diphosphate: step 1/1. It participates in isoprenoid biosynthesis; isopentenyl diphosphate biosynthesis via DXP pathway; isopentenyl diphosphate from 1-deoxy-D-xylulose 5-phosphate: step 6/6. Functionally, catalyzes the conversion of 1-hydroxy-2-methyl-2-(E)-butenyl 4-diphosphate (HMBPP) into a mixture of isopentenyl diphosphate (IPP) and dimethylallyl diphosphate (DMAPP). Acts in the terminal step of the DOXP/MEP pathway for isoprenoid precursor biosynthesis. This chain is 4-hydroxy-3-methylbut-2-enyl diphosphate reductase, found in Xanthomonas oryzae pv. oryzae (strain MAFF 311018).